Consider the following 538-residue polypeptide: Mevalonate kinase erg12 (538 aa).

A disordered region spans residues 1–87 (MGNPRGRRTN…RNMSRKPSSP (87 aa)). A compositionally biased stretch (polar residues) spans 9–29 (TNGSIKTSKGTQRGTVSNLLS). The span at 57–69 (TTPSTTESTLKTT) shows a compositional bias: low complexity. ATP is bound by residues K99, S231, and 236–242 (GAGLGSS). 2 residues coordinate Mg(2+): S242 and E287. The Proton acceptor role is filled by D298.

It belongs to the GHMP kinase family. Mevalonate kinase subfamily. As to quaternary structure, homodimer. Requires Mg(2+) as cofactor.

The protein resides in the cytoplasm. The protein localises to the cytosol. The catalysed reaction is (R)-mevalonate + ATP = (R)-5-phosphomevalonate + ADP + H(+). It participates in isoprenoid biosynthesis; isopentenyl diphosphate biosynthesis via mevalonate pathway; isopentenyl diphosphate from (R)-mevalonate: step 1/3. Its function is as follows. Mevalonate kinase; part of the second module of ergosterol biosynthesis pathway that includes the middle steps of the pathway. Erg12 converts mevalonate into 5-phosphomevalonate. The second module is carried out in the vacuole and involves the formation of farnesyl diphosphate, which is also an important intermediate in the biosynthesis of ubiquinone, dolichol, heme and prenylated proteins. Activity by the mevalonate kinase erg12 (AFUA_4G07780) first converts mevalonate into 5-phosphomevalonate. 5-phosphomevalonate is then further converted to 5-diphosphomevalonate by the phosphomevalonate kinase erg8 (AFUA_5G10680). The diphosphomevalonate decarboxylase mvd1 (AFUA_4G07130) then produces isopentenyl diphosphate. The isopentenyl-diphosphate delta-isomerase idi1 (AFUA_6G11160) then catalyzes the 1,3-allylic rearrangement of the homoallylic substrate isopentenyl (IPP) to its highly electrophilic allylic isomer, dimethylallyl diphosphate (DMAPP). Finally the farnesyl diphosphate synthase erg20 (AFUA_5G02450) catalyzes the sequential condensation of isopentenyl pyrophosphate with dimethylallyl pyrophosphate, and then with the resultant geranylpyrophosphate to the ultimate product farnesyl pyrophosphate. The protein is Mevalonate kinase erg12 of Aspergillus fumigatus (strain ATCC MYA-4609 / CBS 101355 / FGSC A1100 / Af293) (Neosartorya fumigata).